We begin with the raw amino-acid sequence, 142 residues long: Large ribosomal subunit protein uL13 (142 aa).

The protein belongs to the universal ribosomal protein uL13 family. As to quaternary structure, part of the 50S ribosomal subunit.

In terms of biological role, this protein is one of the early assembly proteins of the 50S ribosomal subunit, although it is not seen to bind rRNA by itself. It is important during the early stages of 50S assembly. The protein is Large ribosomal subunit protein uL13 of Delftia acidovorans (strain DSM 14801 / SPH-1).